A 379-amino-acid polypeptide reads, in one-letter code: Cytochrome b (379 aa).

4 consecutive transmembrane segments (helical) span residues 33–53, 77–98, 113–133, and 178–198; these read FGSL…FLAM, WLIR…FIHV, WNIG…GYVL, and FFAF…VHLL. Heme b is bound by residues H83 and H97. Heme b contacts are provided by H182 and H196. H201 contributes to the a ubiquinone binding site. The next 4 helical transmembrane spans lie at 226–246, 288–308, 320–340, and 347–367; these read IKDL…TLFF, LGGV…PLLN, VTQV…WIGG, and FTMI…ILIP.

It belongs to the cytochrome b family. The cytochrome bc1 complex contains 11 subunits: 3 respiratory subunits (MT-CYB, CYC1 and UQCRFS1), 2 core proteins (UQCRC1 and UQCRC2) and 6 low-molecular weight proteins (UQCRH/QCR6, UQCRB/QCR7, UQCRQ/QCR8, UQCR10/QCR9, UQCR11/QCR10 and a cleavage product of UQCRFS1). This cytochrome bc1 complex then forms a dimer. Heme b is required as a cofactor.

It localises to the mitochondrion inner membrane. In terms of biological role, component of the ubiquinol-cytochrome c reductase complex (complex III or cytochrome b-c1 complex) that is part of the mitochondrial respiratory chain. The b-c1 complex mediates electron transfer from ubiquinol to cytochrome c. Contributes to the generation of a proton gradient across the mitochondrial membrane that is then used for ATP synthesis. This chain is Cytochrome b (MT-CYB), found in Akodon subfuscus (Puno grass mouse).